The sequence spans 744 residues: Eukaryotic translation initiation factor 3 subunit B (744 aa).

Residues 1–20 (MAPSFDHLPDPEEDEYDEEE) are disordered. Residues 11–20 (PEEDEYDEEE) are compositionally biased toward acidic residues. In terms of domain architecture, RRM spans 40–126 (TFVVIDGLPE…HTLRVNKLTD (87 aa)). WD repeat units follow at residues 193–232 (DRQH…RQKR), 234–290 (AHPF…PLRS), 307–348 (PVKR…LLDK), and 577–622 (ADHY…LREE). A compositionally biased stretch (basic and acidic residues) spans 699–714 (EREDAGLPRDPLEPLK). Residues 699–722 (EREDAGLPRDPLEPLKSKMASGDE) are disordered.

The protein belongs to the eIF-3 subunit B family. As to quaternary structure, component of the eukaryotic translation initiation factor 3 (eIF-3) complex.

It is found in the cytoplasm. RNA-binding component of the eukaryotic translation initiation factor 3 (eIF-3) complex, which is involved in protein synthesis of a specialized repertoire of mRNAs and, together with other initiation factors, stimulates binding of mRNA and methionyl-tRNAi to the 40S ribosome. The eIF-3 complex specifically targets and initiates translation of a subset of mRNAs involved in cell proliferation. The chain is Eukaryotic translation initiation factor 3 subunit B (prt1) from Sclerotinia sclerotiorum (strain ATCC 18683 / 1980 / Ss-1) (White mold).